Consider the following 505-residue polypeptide: Activin receptor type-1B (505 aa).

Residues 1-23 (MAESAGASSFFPLVVLLLAGSGG) form the signal peptide. The Extracellular segment spans residues 24 to 126 (SGPRGIQALL…AHPSMWGPVE (103 aa)). Residue Asn43 is glycosylated (N-linked (GlcNAc...) asparagine). Residues 127 to 149 (LVGIIAGPVFLLFLIIIIVFLVI) traverse the membrane as a helical segment. At 150–505 (NYHQRVYHNR…QLSVQEDVKI (356 aa)) the chain is on the cytoplasmic side. In terms of domain architecture, GS spans 177–206 (KTLQDLVYDLSTSGSGSGLPLFVQRTVART). Residues 207–497 (IVLQEIIGKG…LRIKKTLSQL (291 aa)) form the Protein kinase domain. ATP contacts are provided by residues 213–221 (IGKGRFGEV) and Lys234. Residue Asp335 is the Proton acceptor of the active site. A Phosphotyrosine modification is found at Tyr380.

Belongs to the protein kinase superfamily. TKL Ser/Thr protein kinase family. TGFB receptor subfamily. As to quaternary structure, forms an activin receptor complex with activin receptor type-2 (ACVR2A or ACVR2B). Part of a complex consisting of MAGI2/ARIP1, ACVR2A, ACVR1B and SMAD3. Interacts with SMAD2 and SMAD3. Interacts with SMAD7. Interacts with FKBP1A. Interacts with IGSF1. Interacts with CRIPTO. Interacts with TDP2. Interacts with TSC22D1/TSC-22. In terms of processing, autophosphorylated. Phosphorylated by activin receptor type-2 (ACVR2A or ACVR2B) in response to activin-binding at serine and threonine residues in the GS domain. Phosphorylation of ACVR1B by activin receptor type-2 regulates association with SMAD7. Ubiquitinated. Level of ubiquitination is regulated by the SMAD7-SMURF1 complex. Post-translationally, ubiquitinated.

The protein resides in the cell membrane. It catalyses the reaction L-threonyl-[receptor-protein] + ATP = O-phospho-L-threonyl-[receptor-protein] + ADP + H(+). It carries out the reaction L-seryl-[receptor-protein] + ATP = O-phospho-L-seryl-[receptor-protein] + ADP + H(+). With respect to regulation, activin receptor type-2 (ACVR2A or ACVR2B) activates the type-1 receptor through phosphorylation of its regulatory GS domain. Transmembrane serine/threonine kinase activin type-1 receptor forming an activin receptor complex with activin receptor type-2 (ACVR2A or ACVR2B). Transduces the activin signal from the cell surface to the cytoplasm and is thus regulating a many physiological and pathological processes including neuronal differentiation and neuronal survival, hair follicle development and cycling, FSH production by the pituitary gland, wound healing, extracellular matrix production, immunosuppression and carcinogenesis. Activin is also thought to have a paracrine or autocrine role in follicular development in the ovary. Within the receptor complex, type-2 receptors (ACVR2A and/or ACVR2B) act as a primary activin receptors whereas the type-1 receptors like ACVR1B act as downstream transducers of activin signals. Activin binds to type-2 receptor at the plasma membrane and activates its serine-threonine kinase. The activated receptor type-2 then phosphorylates and activates the type-1 receptor such as ACVR1B. Once activated, the type-1 receptor binds and phosphorylates the SMAD proteins SMAD2 and SMAD3, on serine residues of the C-terminal tail. Soon after their association with the activin receptor and subsequent phosphorylation, SMAD2 and SMAD3 are released into the cytoplasm where they interact with the common partner SMAD4. This SMAD complex translocates into the nucleus where it mediates activin-induced transcription. Inhibitory SMAD7, which is recruited to ACVR1B through FKBP1A, can prevent the association of SMAD2 and SMAD3 with the activin receptor complex, thereby blocking the activin signal. Activin signal transduction is also antagonized by the binding to the receptor of inhibin-B via the IGSF1 inhibin coreceptor. ACVR1B also phosphorylates TDP2. The polypeptide is Activin receptor type-1B (Acvr1b) (Mus musculus (Mouse)).